We begin with the raw amino-acid sequence, 318 residues long: Probable cell division protein WhiA (318 aa).

The segment at residues 281–314 (SLKELGQMLVPPVGKSGVNHRLRKIEEISKKLKE) is a DNA-binding region (H-T-H motif).

Belongs to the WhiA family.

In terms of biological role, involved in cell division and chromosome segregation. The protein is Probable cell division protein WhiA of Thermoanaerobacter pseudethanolicus (strain ATCC 33223 / 39E) (Clostridium thermohydrosulfuricum).